Consider the following 420-residue polypeptide: Maturation protein A2 (420 aa).

RNA-binding stretches follow at residues 158–176, 226–236, and 294–298; these read IKYL…RAVK, QNRHDKIQRLL, and PVSDW.

It belongs to the Leviviricetes maturation protein family. In terms of assembly, interacts with host MurA; this interaction inhibits the first step in host cell wall synthesis. Interacts with the capsid protein.

It is found in the virion. In terms of biological role, induces host cell lysis. Inhibits host MurA activity thereby blocking the synthesis of murein precursors necessary for the host cell wall biosynthesis. May be responsible for the attachment to the host pilus. Makes extensive contacts with the viral genome. The protein is Maturation protein A2 of Escherichia virus Qbeta (Bacteriophage Q-beta).